The following is a 354-amino-acid chain: Methionine import ATP-binding protein MetN (354 aa).

Residues 8-250 form the ABC transporter domain; it reads LDHIDITFRQ…PKEALTQKFI (243 aa). 42–49 is an ATP binding site; it reads GYSGAGKS.

The protein belongs to the ABC transporter superfamily. Methionine importer (TC 3.A.1.24) family. As to quaternary structure, the complex is composed of two ATP-binding proteins (MetN), two transmembrane proteins (MetI) and a solute-binding protein (MetQ).

It localises to the cell membrane. It catalyses the reaction L-methionine(out) + ATP + H2O = L-methionine(in) + ADP + phosphate + H(+). It carries out the reaction D-methionine(out) + ATP + H2O = D-methionine(in) + ADP + phosphate + H(+). In terms of biological role, part of the ABC transporter complex MetNIQ involved in methionine import. Responsible for energy coupling to the transport system. This Streptococcus pyogenes serotype M18 (strain MGAS8232) protein is Methionine import ATP-binding protein MetN.